The primary structure comprises 379 residues: uncharacterized protein (379 aa).

This sequence belongs to the mimivirus L17x/L18x family.

This is an uncharacterized protein from Acanthamoeba polyphaga mimivirus (APMV).